The following is a 1061-amino-acid chain: Atrial natriuretic peptide receptor 1 (1061 aa).

Residues 1 to 32 (MPGPRRPAGSRLRLLLLLLLPPLLLLLRGSHA) form the signal peptide. The Extracellular portion of the chain corresponds to 33-473 (GNLTVAVVLP…CNQDHLSTLE (441 aa)). Residues Asn-34 and Asn-45 are each glycosylated (N-linked (GlcNAc...) asparagine). Positions 85, 117, and 118 each coordinate chloride. Intrachain disulfides connect Cys-92/Cys-118 and Cys-196/Cys-245. N-linked (GlcNAc...) asparagine glycans are attached at residues Asn-212, Asn-338, Asn-379, Asn-386, and Asn-427. An intrachain disulfide couples Cys-455 to Cys-464. A helical membrane pass occupies residues 474 to 494 (VLALVGSLSLLGILIVSFFIY). Residues 495-1061 (RKMQLEKELA…LGERGSSTRG (567 aa)) lie on the Cytoplasmic side of the membrane. Phosphoserine occurs at positions 519 and 529. The region spanning 528–805 (GSRLTLSGRG…QIRLTLRKFN (278 aa)) is the Protein kinase domain. Phosphothreonine is present on Thr-532. 3 positions are modified to phosphoserine: Ser-534, Ser-538, and Ser-542. Residue Thr-545 is modified to Phosphothreonine. In terms of domain architecture, Guanylate cyclase spans 876-1006 (TIYFSDIVGF…DTVNTASRME (131 aa)).

The protein belongs to the adenylyl cyclase class-4/guanylyl cyclase family. As to quaternary structure, homodimer. Post-translationally, phosphorylation of the protein kinase-like domain is required for full activation by ANP.

The protein resides in the membrane. The catalysed reaction is GTP = 3',5'-cyclic GMP + diphosphate. Functionally, receptor for the atrial natriuretic peptide NPPA/ANP and the brain natriuretic peptide NPPB/BNP which are potent vasoactive hormones playing a key role in cardiovascular homeostasis. Plays an essential role in the regulation of endothelial cell senescence and vascular aging. Upon activation by ANP or BNP, stimulates the production of cyclic guanosine monophosphate (cGMP) that promotes vascular tone and volume homeostasis by activation of protein kinase cGMP-dependent 1/PRKG1 and subsequently PRKAA1, thereby controlling blood pressure and maintaining cardiovascular homeostasis. In Homo sapiens (Human), this protein is Atrial natriuretic peptide receptor 1.